The following is a 312-amino-acid chain: Malate dehydrogenase (312 aa).

Residues 7–13 (GAAGGIG) and D34 each bind NAD(+). 2 residues coordinate substrate: R81 and R87. Residues N94 and 117–119 (ITN) each bind NAD(+). The substrate site is built by N119 and R153. H177 serves as the catalytic Proton acceptor. M227 serves as a coordination point for NAD(+).

This sequence belongs to the LDH/MDH superfamily. MDH type 1 family. Homodimer.

The catalysed reaction is (S)-malate + NAD(+) = oxaloacetate + NADH + H(+). Catalyzes the reversible oxidation of malate to oxaloacetate. In Salmonella newport (strain SL254), this protein is Malate dehydrogenase.